The following is a 1068-amino-acid chain: Carbamoyl phosphate synthase large chain (1068 aa).

Residues 1–401 (MPRNNDIKKV…ALMKAIRSLE (401 aa)) are carboxyphosphate synthetic domain. ATP is bound by residues R129, R169, G175, G176, R208, I210, E215, G241, V242, H243, Q284, and E298. An ATP-grasp 1 domain is found at 133–327 (KDTMEKIGEP…IAKVTAKIAL (195 aa)). Q284, E298, and N300 together coordinate Mg(2+). Mn(2+) is bound by residues Q284, E298, and N300. The segment at 402-546 (QHVDSLMSYD…YSVFGSENEA (145 aa)) is oligomerization domain. Positions 547–930 (AETNPQKKVL…ALYKAFEGAG (384 aa)) are carbamoyl phosphate synthetic domain. Residues 672-862 (DEILQKTGIP…IVDLAARIIM (191 aa)) form the ATP-grasp 2 domain. ATP contacts are provided by R708, K747, L749, E753, G778, V779, H780, S781, Q821, and E833. Residues Q821, E833, and N835 each contribute to the Mg(2+) site. Mn(2+) is bound by residues Q821, E833, and N835. Positions 931–1068 (VELPKYKQMI…PVDIATVKNL (138 aa)) constitute an MGS-like domain. The tract at residues 931–1068 (VELPKYKQMI…PVDIATVKNL (138 aa)) is allosteric domain.

Belongs to the CarB family. In terms of assembly, composed of two chains; the small (or glutamine) chain promotes the hydrolysis of glutamine to ammonia, which is used by the large (or ammonia) chain to synthesize carbamoyl phosphate. Tetramer of heterodimers (alpha,beta)4. Mg(2+) is required as a cofactor. Mn(2+) serves as cofactor.

It catalyses the reaction hydrogencarbonate + L-glutamine + 2 ATP + H2O = carbamoyl phosphate + L-glutamate + 2 ADP + phosphate + 2 H(+). It carries out the reaction hydrogencarbonate + NH4(+) + 2 ATP = carbamoyl phosphate + 2 ADP + phosphate + 2 H(+). It functions in the pathway amino-acid biosynthesis; L-arginine biosynthesis; carbamoyl phosphate from bicarbonate: step 1/1. It participates in pyrimidine metabolism; UMP biosynthesis via de novo pathway; (S)-dihydroorotate from bicarbonate: step 1/3. Its function is as follows. Large subunit of the glutamine-dependent carbamoyl phosphate synthetase (CPSase). CPSase catalyzes the formation of carbamoyl phosphate from the ammonia moiety of glutamine, carbonate, and phosphate donated by ATP, constituting the first step of 2 biosynthetic pathways, one leading to arginine and/or urea and the other to pyrimidine nucleotides. The large subunit (synthetase) binds the substrates ammonia (free or transferred from glutamine from the small subunit), hydrogencarbonate and ATP and carries out an ATP-coupled ligase reaction, activating hydrogencarbonate by forming carboxy phosphate which reacts with ammonia to form carbamoyl phosphate. This chain is Carbamoyl phosphate synthase large chain, found in Agathobacter rectalis (strain ATCC 33656 / DSM 3377 / JCM 17463 / KCTC 5835 / VPI 0990) (Eubacterium rectale).